The sequence spans 210 residues: Probable glutathione peroxidase 8 (210 aa).

A helical membrane pass occupies residues 21–40 (VLLSMTVGVGCLLLLQTQLL).

The protein belongs to the glutathione peroxidase family.

It localises to the membrane. It carries out the reaction 2 glutathione + H2O2 = glutathione disulfide + 2 H2O. This is Probable glutathione peroxidase 8 (gpx8) from Tetraodon nigroviridis (Spotted green pufferfish).